Here is a 266-residue protein sequence, read N- to C-terminus: Glucosamine-6-phosphate deaminase (266 aa).

Catalysis depends on D72, which acts as the Proton acceptor; for enolization step. The active-site For ring-opening step is D141. The active-site Proton acceptor; for ring-opening step is the H143. E148 acts as the For ring-opening step in catalysis.

Belongs to the glucosamine/galactosamine-6-phosphate isomerase family. NagB subfamily. Homohexamer.

It carries out the reaction alpha-D-glucosamine 6-phosphate + H2O = beta-D-fructose 6-phosphate + NH4(+). The protein operates within amino-sugar metabolism; N-acetylneuraminate degradation; D-fructose 6-phosphate from N-acetylneuraminate: step 5/5. With respect to regulation, allosterically activated by N-acetylglucosamine 6-phosphate (GlcNAc6P). Its function is as follows. Catalyzes the reversible isomerization-deamination of glucosamine 6-phosphate (GlcN6P) to form fructose 6-phosphate (Fru6P) and ammonium ion. The polypeptide is Glucosamine-6-phosphate deaminase (Salmonella typhimurium (strain LT2 / SGSC1412 / ATCC 700720)).